A 126-amino-acid chain; its full sequence is Anti-adapter protein IraD (126 aa).

Belongs to the GpW/Gp25 family. IraD subfamily. Interacts with RssB.

It localises to the cytoplasm. Functionally, inhibits RpoS proteolysis by regulating RssB activity, thereby increasing the stability of the sigma stress factor RpoS during oxidative stress. Its effect on RpoS stability is due to its interaction with RssB, which probably blocks the interaction of RssB with RpoS, and the consequent delivery of the RssB-RpoS complex to the ClpXP protein degradation pathway. The polypeptide is Anti-adapter protein IraD (Salmonella paratyphi A (strain ATCC 9150 / SARB42)).